Reading from the N-terminus, the 360-residue chain is GTPase Obg (360 aa).

One can recognise an Obg domain in the interval 1 to 156 (MFVDSVEIII…KCVRLELKLI (156 aa)). The 204-residue stretch at 157–360 (ADIGLVGFPN…LKFVLLKALP (204 aa)) folds into the OBG-type G domain. GTP-binding positions include 163–170 (GFPNAGKS), 188–192 (FTTLV), 210–213 (DIPG), 279–282 (NKCD), and 341–343 (SAV). Mg(2+) is bound by residues Ser-170 and Thr-190.

It belongs to the TRAFAC class OBG-HflX-like GTPase superfamily. OBG GTPase family. In terms of assembly, monomer. Mg(2+) is required as a cofactor.

Its subcellular location is the cytoplasm. Functionally, an essential GTPase which binds GTP, GDP and possibly (p)ppGpp with moderate affinity, with high nucleotide exchange rates and a fairly low GTP hydrolysis rate. Plays a role in control of the cell cycle, stress response, ribosome biogenesis and in those bacteria that undergo differentiation, in morphogenesis control. The sequence is that of GTPase Obg from Helicobacter pylori (strain G27).